The following is a 167-amino-acid chain: uncharacterized protein (167 aa).

The stretch at 70–118 (KIVELRKAMESIITELAYIKGELKGLQEKGESKVERKEIIEEKIQKAMV) forms a coiled coil. Basic and acidic residues predominate over residues 128–155 (EKEERKPAKESKRREHDVIIPEGKKEER). Residues 128–167 (EKEERKPAKESKRREHDVIIPEGKKEERTDDGEDGLIVCD) are disordered.

This is an uncharacterized protein from Archaeoglobus fulgidus (strain ATCC 49558 / DSM 4304 / JCM 9628 / NBRC 100126 / VC-16).